A 168-amino-acid chain; its full sequence is NAD(P)H-quinone oxidoreductase subunit J, chloroplastic (168 aa).

It belongs to the complex I 30 kDa subunit family. NDH is composed of at least 16 different subunits, 5 of which are encoded in the nucleus.

It is found in the plastid. It localises to the chloroplast thylakoid membrane. The catalysed reaction is a plastoquinone + NADH + (n+1) H(+)(in) = a plastoquinol + NAD(+) + n H(+)(out). It catalyses the reaction a plastoquinone + NADPH + (n+1) H(+)(in) = a plastoquinol + NADP(+) + n H(+)(out). NDH shuttles electrons from NAD(P)H:plastoquinone, via FMN and iron-sulfur (Fe-S) centers, to quinones in the photosynthetic chain and possibly in a chloroplast respiratory chain. The immediate electron acceptor for the enzyme in this species is believed to be plastoquinone. Couples the redox reaction to proton translocation, and thus conserves the redox energy in a proton gradient. This chain is NAD(P)H-quinone oxidoreductase subunit J, chloroplastic, found in Chaetosphaeridium globosum (Charophycean green alga).